The sequence spans 376 residues: Probable deoxyhypusine synthase (376 aa).

NAD(+) contacts are provided by residues 105–109, 131–133, glutamate 137, and aspartate 238; these read SNLVS and TAG. 136–137 contributes to the spermidine binding site; the sequence is EE. Residue aspartate 243 participates in spermidine binding. NAD(+) is bound at residue glycine 283. Histidine 288 contacts spermidine. 308–309 serves as a coordination point for NAD(+); the sequence is TG. Spermidine is bound by residues 314 to 316 and 323 to 329; these read GSD and EAVSWGK. Lysine 329 acts as the Nucleophile in catalysis. 342-343 is a binding site for NAD(+); sequence EA.

The protein belongs to the deoxyhypusine synthase family. NAD(+) serves as cofactor.

It catalyses the reaction [eIF5A protein]-L-lysine + spermidine = [eIF5A protein]-deoxyhypusine + propane-1,3-diamine. It functions in the pathway protein modification; eIF5A hypusination. Catalyzes the NAD-dependent oxidative cleavage of spermidine and the subsequent transfer of the butylamine moiety of spermidine to the epsilon-amino group of a critical lysine residue of the eIF-5A precursor protein to form the intermediate deoxyhypusine residue. This is the first step of the post-translational modification of that lysine into an unusual amino acid residue named hypusine. Hypusination is unique to mature eIF-5A factor and is essential for its function. The protein is Probable deoxyhypusine synthase (dhps) of Dictyostelium discoideum (Social amoeba).